The following is a 73-amino-acid chain: Translation initiation factor IF-1 (73 aa).

Positions 1 to 73 (MAKKEDTIVL…TKARVVYRHR (73 aa)) constitute an S1-like domain.

This sequence belongs to the IF-1 family. Component of the 30S ribosomal translation pre-initiation complex which assembles on the 30S ribosome in the order IF-2 and IF-3, IF-1 and N-formylmethionyl-tRNA(fMet); mRNA recruitment can occur at any time during PIC assembly.

The protein resides in the cytoplasm. In terms of biological role, one of the essential components for the initiation of protein synthesis. Stabilizes the binding of IF-2 and IF-3 on the 30S subunit to which N-formylmethionyl-tRNA(fMet) subsequently binds. Helps modulate mRNA selection, yielding the 30S pre-initiation complex (PIC). Upon addition of the 50S ribosomal subunit IF-1, IF-2 and IF-3 are released leaving the mature 70S translation initiation complex. The sequence is that of Translation initiation factor IF-1 from Chlamydia muridarum (strain MoPn / Nigg).